A 489-amino-acid chain; its full sequence is Glycogen synthase (489 aa).

R20 contributes to the ADP-alpha-D-glucose binding site.

This sequence belongs to the glycosyltransferase 1 family. Bacterial/plant glycogen synthase subfamily.

The enzyme catalyses [(1-&gt;4)-alpha-D-glucosyl](n) + ADP-alpha-D-glucose = [(1-&gt;4)-alpha-D-glucosyl](n+1) + ADP + H(+). It functions in the pathway glycan biosynthesis; glycogen biosynthesis. Its function is as follows. Synthesizes alpha-1,4-glucan chains using ADP-glucose. The protein is Glycogen synthase of Chlorobium chlorochromatii (strain CaD3).